The primary structure comprises 747 residues: Protein O-mannosyl-transferase 1 (747 aa).

Transmembrane regions (helical) follow at residues 8-28 (PVVV…MGLL), 40-60 (VVFD…QIFF), 68-88 (FGHM…NFLW), 99-119 (VPVW…VPMA), 122-142 (IVLE…LMLI), 154-174 (LLES…LKFF), 183-203 (SLSW…AVGI), 206-226 (MGVF…WHLL), and 269-289 (LLVI…ILVF). MIR domains are found at residues 318-381 (PLEV…VKDP), 392-449 (PRPV…LEIV), and 453-513 (SDTD…VEEH). Residues Asn435, Asn471, and Asn539 are each glycosylated (N-linked (GlcNAc...) asparagine). The next 3 helical transmembrane spans lie at 597 to 617 (IVIW…SLWY), 636 to 656 (WVLA…PFFL), and 661 to 681 (LFLY…PVVL).

This sequence belongs to the glycosyltransferase 39 family. Interacts with POMT2. In terms of tissue distribution, widely expressed. Highly expressed in testis, heart and pancreas. Detected at lower levels in kidney, skeletal muscle, brain, placenta, lung and liver.

The protein localises to the endoplasmic reticulum membrane. It catalyses the reaction a di-trans,poly-cis-dolichyl beta-D-mannosyl phosphate + L-seryl-[protein] = 3-O-(alpha-D-mannosyl)-L-seryl-[protein] + a di-trans,poly-cis-dolichyl phosphate + H(+). It carries out the reaction a di-trans,poly-cis-dolichyl beta-D-mannosyl phosphate + L-threonyl-[protein] = 3-O-(alpha-D-mannosyl)-L-threonyl-[protein] + a di-trans,poly-cis-dolichyl phosphate + H(+). The protein operates within protein modification; protein glycosylation. Slightly activated by Mg(2+) and inhibited by both Ca(+) and Mn(2+). EDTA ha no effect on activity in vitro. Functionally, transfers mannosyl residues to the hydroxyl group of serine or threonine residues. Coexpression of both POMT1 and POMT2 is necessary for enzyme activity, expression of either POMT1 or POMT2 alone is insufficient. Essentially dedicated to O-mannosylation of alpha-DAG1 and few other proteins but not of cadherins and protocaherins. This is Protein O-mannosyl-transferase 1 (POMT1) from Homo sapiens (Human).